Reading from the N-terminus, the 555-residue chain is CTP synthase (555 aa).

The interval 1 to 271 (MVKRGKKTKY…DDKLAELFNI (271 aa)) is amidoligase domain. CTP is bound at residue Ser-19. Ser-19 contacts UTP. Residues 20 to 25 (SLGKGL) and Asp-77 each bind ATP. Positions 77 and 145 each coordinate Mg(2+). CTP contacts are provided by residues 152–154 (DIE), 192–197 (KTKPTQ), and Lys-228. UTP contacts are provided by residues 192–197 (KTKPTQ) and Lys-228. Residues 297-537 (RIGIVGKYVE…VKAALEHRDA (241 aa)) enclose the Glutamine amidotransferase type-1 domain. Gly-358 contacts L-glutamine. The Nucleophile; for glutamine hydrolysis role is filled by Cys-385. Residues 386 to 389 (LGLQ), Glu-409, and Arg-466 each bind L-glutamine. Active-site residues include His-510 and Glu-512. A disordered region spans residues 535–555 (RDAQQRQPPAEVKKLAVGKNG).

Belongs to the CTP synthase family. Homotetramer.

It carries out the reaction UTP + L-glutamine + ATP + H2O = CTP + L-glutamate + ADP + phosphate + 2 H(+). The enzyme catalyses L-glutamine + H2O = L-glutamate + NH4(+). It catalyses the reaction UTP + NH4(+) + ATP = CTP + ADP + phosphate + 2 H(+). It participates in pyrimidine metabolism; CTP biosynthesis via de novo pathway; CTP from UDP: step 2/2. Allosterically activated by GTP, when glutamine is the substrate; GTP has no effect on the reaction when ammonia is the substrate. The allosteric effector GTP functions by stabilizing the protein conformation that binds the tetrahedral intermediate(s) formed during glutamine hydrolysis. Inhibited by the product CTP, via allosteric rather than competitive inhibition. In terms of biological role, catalyzes the ATP-dependent amination of UTP to CTP with either L-glutamine or ammonia as the source of nitrogen. Regulates intracellular CTP levels through interactions with the four ribonucleotide triphosphates. The chain is CTP synthase from Anaeromyxobacter sp. (strain K).